A 452-amino-acid chain; its full sequence is Protein henna (452 aa).

One can recognise an ACT domain in the interval 36-107 (FSPKDSSLSS…EQCSYFNIIS (72 aa)). Ser272 bears the Phosphoserine; by CaMK2 mark. Fe cation is bound by residues His284, His289, and Glu329.

This sequence belongs to the biopterin-dependent aromatic amino acid hydroxylase family. The cofactor is Fe(2+). As to expression, phenylalanine hydrolase activity is found in yolk granules of embryos, and female abdomen and fat body tissues. Tryptophan hydroxylase is expressed in serotonergic neurons. Both enzymes are present in cuticular tissues.

The catalysed reaction is (6R)-L-erythro-5,6,7,8-tetrahydrobiopterin + L-phenylalanine + O2 = (4aS,6R)-4a-hydroxy-L-erythro-5,6,7,8-tetrahydrobiopterin + L-tyrosine. It catalyses the reaction (6R)-L-erythro-5,6,7,8-tetrahydrobiopterin + L-tryptophan + O2 = 5-hydroxy-L-tryptophan + (4aS,6R)-4a-hydroxy-L-erythro-5,6,7,8-tetrahydrobiopterin. The protein operates within amino-acid degradation; L-phenylalanine degradation; acetoacetate and fumarate from L-phenylalanine: step 1/6. N-terminal region of PAH is thought to contain allosteric binding sites for phenylalanine and to constitute an 'inhibitory' domain that regulates the activity of a catalytic domain in the C-terminal portion of the molecule. The polypeptide is Protein henna (Hn) (Drosophila melanogaster (Fruit fly)).